We begin with the raw amino-acid sequence, 194 residues long: ATP-dependent Clp protease proteolytic subunit (194 aa).

The active-site Nucleophile is serine 98. Histidine 123 is an active-site residue.

The protein belongs to the peptidase S14 family. In terms of assembly, fourteen ClpP subunits assemble into 2 heptameric rings which stack back to back to give a disk-like structure with a central cavity, resembling the structure of eukaryotic proteasomes.

The protein resides in the cytoplasm. It carries out the reaction Hydrolysis of proteins to small peptides in the presence of ATP and magnesium. alpha-casein is the usual test substrate. In the absence of ATP, only oligopeptides shorter than five residues are hydrolyzed (such as succinyl-Leu-Tyr-|-NHMec, and Leu-Tyr-Leu-|-Tyr-Trp, in which cleavage of the -Tyr-|-Leu- and -Tyr-|-Trp bonds also occurs).. Functionally, cleaves peptides in various proteins in a process that requires ATP hydrolysis. Has a chymotrypsin-like activity. Plays a major role in the degradation of misfolded proteins. The polypeptide is ATP-dependent Clp protease proteolytic subunit (Acetivibrio thermocellus (strain ATCC 27405 / DSM 1237 / JCM 9322 / NBRC 103400 / NCIMB 10682 / NRRL B-4536 / VPI 7372) (Clostridium thermocellum)).